The following is a 173-amino-acid chain: Glutamyl-tRNA(Gln) amidotransferase subunit C-1, mitochondrial (173 aa).

A mitochondrion-targeting transit peptide spans 1–23; sequence MIRIPFRLRPPPGRTLHSLVRTF. The tract at residues 51–70 is disordered; that stretch reads PSKVPQRPHKSTTTVGQSTP. The segment covering 61–70 has biased composition (polar residues); the sequence is STTTVGQSTP.

Belongs to the GatC family. In terms of assembly, subunit of the heterotrimeric GatCAB amidotransferase (AdT) complex, composed of A, B and C subunits.

Its subcellular location is the mitochondrion. It catalyses the reaction L-glutamyl-tRNA(Gln) + L-glutamine + ATP + H2O = L-glutaminyl-tRNA(Gln) + L-glutamate + ADP + phosphate + H(+). Functionally, allows the formation of correctly charged Gln-tRNA(Gln) through the transamidation of misacylated Glu-tRNA(Gln) in the mitochondria. The reaction takes place in the presence of glutamine and ATP through an activated gamma-phospho-Glu-tRNA(Gln). This chain is Glutamyl-tRNA(Gln) amidotransferase subunit C-1, mitochondrial, found in Culex quinquefasciatus (Southern house mosquito).